Reading from the N-terminus, the 184-residue chain is Photosystem I assembly protein Ycf4 (184 aa).

2 helical membrane passes run 22–42 and 57–77; these read FCWAVILFLGSLGFLLVGTSS and ILFFPQGIVMSFYGIAGLFIS.

The protein belongs to the Ycf4 family.

The protein resides in the plastid. Its subcellular location is the chloroplast thylakoid membrane. Functionally, seems to be required for the assembly of the photosystem I complex. The chain is Photosystem I assembly protein Ycf4 from Panax ginseng (Korean ginseng).